The primary structure comprises 119 residues: Large ribosomal subunit protein bL12 (119 aa).

It belongs to the bacterial ribosomal protein bL12 family. As to quaternary structure, homodimer. Part of the ribosomal stalk of the 50S ribosomal subunit. Forms a multimeric L10(L12)X complex, where L10 forms an elongated spine to which 2 to 4 L12 dimers bind in a sequential fashion. Binds GTP-bound translation factors.

Its function is as follows. Forms part of the ribosomal stalk which helps the ribosome interact with GTP-bound translation factors. Is thus essential for accurate translation. This chain is Large ribosomal subunit protein bL12, found in Colwellia psychrerythraea (strain 34H / ATCC BAA-681) (Vibrio psychroerythus).